Reading from the N-terminus, the 295-residue chain is Elongation factor Ts (295 aa).

The involved in Mg(2+) ion dislocation from EF-Tu stretch occupies residues 79 to 82 (TDFV).

This sequence belongs to the EF-Ts family.

The protein resides in the cytoplasm. Its function is as follows. Associates with the EF-Tu.GDP complex and induces the exchange of GDP to GTP. It remains bound to the aminoacyl-tRNA.EF-Tu.GTP complex up to the GTP hydrolysis stage on the ribosome. This chain is Elongation factor Ts, found in Bacillus cereus (strain ATCC 10987 / NRS 248).